Reading from the N-terminus, the 120-residue chain is NAD(P)H-quinone oxidoreductase subunit 3, chloroplastic (120 aa).

A run of 3 helical transmembrane segments spans residues 7 to 27, 63 to 83, and 89 to 109; these read YDSF…AFSI, YMFA…YPWA, and LGLF…VGLV.

The protein belongs to the complex I subunit 3 family. In terms of assembly, NDH is composed of at least 16 different subunits, 5 of which are encoded in the nucleus.

The protein localises to the plastid. Its subcellular location is the chloroplast thylakoid membrane. It catalyses the reaction a plastoquinone + NADH + (n+1) H(+)(in) = a plastoquinol + NAD(+) + n H(+)(out). It carries out the reaction a plastoquinone + NADPH + (n+1) H(+)(in) = a plastoquinol + NADP(+) + n H(+)(out). Functionally, NDH shuttles electrons from NAD(P)H:plastoquinone, via FMN and iron-sulfur (Fe-S) centers, to quinones in the photosynthetic chain and possibly in a chloroplast respiratory chain. The immediate electron acceptor for the enzyme in this species is believed to be plastoquinone. Couples the redox reaction to proton translocation, and thus conserves the redox energy in a proton gradient. The protein is NAD(P)H-quinone oxidoreductase subunit 3, chloroplastic of Adiantum capillus-veneris (Maidenhair fern).